Consider the following 394-residue polypeptide: 8-amino-7-oxononanoate synthase (394 aa).

Arg22 is a substrate binding site. 113 to 114 is a pyridoxal 5'-phosphate binding site; sequence GY. His138 lines the substrate pocket. Residues Ser184, His212, and Thr240 each contribute to the pyridoxal 5'-phosphate site. At Lys243 the chain carries N6-(pyridoxal phosphate)lysine. Residue Thr359 participates in substrate binding.

This sequence belongs to the class-II pyridoxal-phosphate-dependent aminotransferase family. BioF subfamily. Homodimer. Pyridoxal 5'-phosphate is required as a cofactor.

The enzyme catalyses 6-carboxyhexanoyl-[ACP] + L-alanine + H(+) = (8S)-8-amino-7-oxononanoate + holo-[ACP] + CO2. Its pathway is cofactor biosynthesis; biotin biosynthesis. Its function is as follows. Catalyzes the decarboxylative condensation of pimeloyl-[acyl-carrier protein] and L-alanine to produce 8-amino-7-oxononanoate (AON), [acyl-carrier protein], and carbon dioxide. This Janthinobacterium sp. (strain Marseille) (Minibacterium massiliensis) protein is 8-amino-7-oxononanoate synthase.